Consider the following 176-residue polypeptide: Non-specific lipid transfer protein GPI-anchored 12 (176 aa).

Residues 1-20 form the signal peptide; the sequence is MLTTNTLAVLLLLFLSLCSG. 4 disulfides stabilise this stretch: Cys-40–Cys-83, Cys-50–Cys-67, Cys-68–Cys-110, and Cys-81–Cys-120. Asn-46 is a glycosylation site (N-linked (GlcNAc...) asparagine). Asn-149 is lipidated: GPI-anchor amidated asparagine. Positions 150-176 are cleaved as a propeptide — removed in mature form; it reads GAMTTKYCGVALNSLALLLLFTFLSLS.

Belongs to the plant LTP family. As to expression, preferentially expressed in the endodermis of hypocotyls and roots of seedlings, and in petals and anthers of inflorescences. May also be expressed in siliques, carpels and pedicels.

Its subcellular location is the cell membrane. In terms of biological role, probable lipid transfer protein. In Arabidopsis thaliana (Mouse-ear cress), this protein is Non-specific lipid transfer protein GPI-anchored 12.